Here is a 253-residue protein sequence, read N- to C-terminus: Adenosylcobinamide-GDP ribazoletransferase (253 aa).

The next 4 helical transmembrane spans lie at 33–53 (ISPL…YVLL), 106–126 (IGSG…VALL), 132–152 (FYTI…GLYI), and 178–198 (VLLL…FLVF).

The protein belongs to the CobS family. The cofactor is Mg(2+).

Its subcellular location is the cell membrane. It carries out the reaction alpha-ribazole + adenosylcob(III)inamide-GDP = adenosylcob(III)alamin + GMP + H(+). The catalysed reaction is alpha-ribazole 5'-phosphate + adenosylcob(III)inamide-GDP = adenosylcob(III)alamin 5'-phosphate + GMP + H(+). Its pathway is cofactor biosynthesis; adenosylcobalamin biosynthesis; adenosylcobalamin from cob(II)yrinate a,c-diamide: step 7/7. Joins adenosylcobinamide-GDP and alpha-ribazole to generate adenosylcobalamin (Ado-cobalamin). Also synthesizes adenosylcobalamin 5'-phosphate from adenosylcobinamide-GDP and alpha-ribazole 5'-phosphate. This is Adenosylcobinamide-GDP ribazoletransferase from Saccharolobus islandicus (strain Y.G.57.14 / Yellowstone #1) (Sulfolobus islandicus).